The sequence spans 340 residues: Protein AC11 (340 aa).

Functionally, plays an essential role in nucleocapsid egress from the host nucleus to form the budded virion (BV). Does not participate in nucleocapsid formation. The polypeptide is Protein AC11 (Autographa californica nuclear polyhedrosis virus (AcMNPV)).